The chain runs to 81 residues: Defensin-like protein 153 (81 aa).

The first 26 residues, 1 to 26 (MKNVSQVSVAVLLIFSILVLGIGVQG), serve as a signal peptide directing secretion. Cystine bridges form between C30–C81, C41–C60, C46–C75, and C50–C77.

This sequence belongs to the DEFL family.

The protein resides in the secreted. The polypeptide is Defensin-like protein 153 (LCR31) (Arabidopsis thaliana (Mouse-ear cress)).